Reading from the N-terminus, the 415-residue chain is Glucose-1-phosphate adenylyltransferase (415 aa).

Alpha-D-glucose 1-phosphate-binding positions include Tyr98, Gly163, 178–179 (EK), and Ser189.

Belongs to the bacterial/plant glucose-1-phosphate adenylyltransferase family. In terms of assembly, homotetramer.

The enzyme catalyses alpha-D-glucose 1-phosphate + ATP + H(+) = ADP-alpha-D-glucose + diphosphate. Its pathway is glycan biosynthesis; glycogen biosynthesis. Functionally, involved in the biosynthesis of ADP-glucose, a building block required for the elongation reactions to produce glycogen. Catalyzes the reaction between ATP and alpha-D-glucose 1-phosphate (G1P) to produce pyrophosphate and ADP-Glc. The protein is Glucose-1-phosphate adenylyltransferase of Fervidobacterium nodosum (strain ATCC 35602 / DSM 5306 / Rt17-B1).